Here is a 490-residue protein sequence, read N- to C-terminus: ATP-dependent 6-phosphofructokinase (490 aa).

Residues Gly109, 175 to 176 (RG), and 200 to 203 (GDGT) each bind ATP. Asp201 contacts Mg(2+). Residues 229–231 (TID), 274–276 (MGR), Glu327, and 383–386 (YMIR) contribute to the substrate site. The active-site Proton acceptor is the Asp231. Positions 488 to 490 (SKL) match the Peroxisomal targeting signal motif.

It belongs to the phosphofructokinase type A (PFKA) family. PPi-dependent PFK group II subfamily. Atypical ATP-dependent clade 'X' sub-subfamily. As to quaternary structure, homotetramer. Mg(2+) serves as cofactor.

It localises to the glycosome. The enzyme catalyses beta-D-fructose 6-phosphate + ATP = beta-D-fructose 1,6-bisphosphate + ADP + H(+). It functions in the pathway carbohydrate degradation; glycolysis; D-glyceraldehyde 3-phosphate and glycerone phosphate from D-glucose: step 3/4. With respect to regulation, allosterically activated by AMP. Catalyzes the phosphorylation of D-fructose 6-phosphate to fructose 1,6-bisphosphate by ATP, the first committing step of glycolysis. The polypeptide is ATP-dependent 6-phosphofructokinase (Trypanoplasma borreli).